We begin with the raw amino-acid sequence, 255 residues long: Small ribosomal subunit protein eS1 (255 aa).

A compositionally biased stretch (basic residues) spans 1 to 18 (MAVGKNKRLSKGKKGLKK). A disordered region spans residues 1–20 (MAVGKNKRLSKGKKGLKKRV). Residue A2 is modified to N-acetylalanine; partial.

This sequence belongs to the eukaryotic ribosomal protein eS1 family. As to quaternary structure, component of the small ribosomal subunit. Mature ribosomes consist of a small (40S) and a large (60S) subunit. The 40S subunit contains about 33 different proteins and 1 molecule of RNA (18S). The 60S subunit contains about 49 different proteins and 3 molecules of RNA (25S, 5.8S and 5S).

The protein resides in the cytoplasm. The chain is Small ribosomal subunit protein eS1 from Coccidioides immitis (strain RS) (Valley fever fungus).